Here is a 695-residue protein sequence, read N- to C-terminus: Interleukin-1 receptor accessory protein-like 1 (695 aa).

The N-terminal stretch at 1–24 (MKAPIPHLILLYATFTQSLKVVTK) is a signal peptide. One can recognise an Ig-like C2-type 1 domain in the interval 25-134 (RGSADGCTDW…YCMKVSISLT (110 aa)). The Extracellular segment spans residues 25–357 (RGSADGCTDW…LLHKRELMYT (333 aa)). Disulfide bonds link cysteine 31/cysteine 126 and cysteine 53/cysteine 118. Asparagine 63, asparagine 122, and asparagine 138 each carry an N-linked (GlcNAc...) asparagine glycan. Disulfide bonds link cysteine 143–cysteine 185 and cysteine 164–cysteine 216. 2 consecutive Ig-like C2-type domains span residues 143-232 (CYNS…TELT) and 242-350 (PKLL…VLLH). Asparagine 213, asparagine 264, and asparagine 331 each carry an N-linked (GlcNAc...) asparagine glycan. Cysteine 267 and cysteine 334 are joined by a disulfide. A helical membrane pass occupies residues 358-378 (VELAGGLGAILLLLICSVTIY). Topologically, residues 379-695 (KCYKIEIMLF…RETSISSVIW (317 aa)) are cytoplasmic. The TIR domain maps to 403–558 (KDYDAYLSYT…KFWKRLQYEM (156 aa)). Residue glutamate 490 is part of the active site. An interaction with NCS1 region spans residues 548–643 (SKFWKRLQYE…TGTLPLTSIG (96 aa)). Residues 657–679 (NGQRPQTKSNREPNPDEAHTNSA) are disordered. Residues 665 to 675 (SNREPNPDEAH) show a composition bias toward basic and acidic residues.

It belongs to the interleukin-1 receptor family. In terms of assembly, homodimer. Interacts (calcium-independent) with NCS1/FREQ. Interacts (via the first immunoglobilin domain) with PTPRD (via the second immunoglobilin domain); this interaction is PTPRD-splicing-dependent and induces pre- and post-synaptic differentiation of neurons and is required for IL1RAPL1-mediated synapse formation. Detected in total brain extracts, olfactory bulb, hippocampus and striatum (at protein level).

It localises to the cell membrane. It is found in the cytoplasm. Its subcellular location is the cell projection. The protein resides in the axon. The protein localises to the dendrite. The catalysed reaction is NAD(+) + H2O = ADP-D-ribose + nicotinamide + H(+). Functionally, may regulate secretion and presynaptic differentiation through inhibition of the activity of N-type voltage-gated calcium channel. May activate the MAP kinase JNK. Plays a role in neurite outgrowth. During dendritic spine formation can bidirectionally induce pre- and post-synaptic differentiation of neurons by trans-synaptically binding to PTPRD. The protein is Interleukin-1 receptor accessory protein-like 1 (Il1rapl1) of Mus musculus (Mouse).